We begin with the raw amino-acid sequence, 299 residues long: UDP-N-acetylenolpyruvoylglucosamine reductase (299 aa).

In terms of domain architecture, FAD-binding PCMH-type spans 28–193; that stretch reads IGGPVDLMVL…VSALMQLHKE (166 aa). Arg172 is an active-site residue. Ser222 acts as the Proton donor in catalysis. The active site involves Glu292.

Belongs to the MurB family. FAD serves as cofactor.

It localises to the cytoplasm. The catalysed reaction is UDP-N-acetyl-alpha-D-muramate + NADP(+) = UDP-N-acetyl-3-O-(1-carboxyvinyl)-alpha-D-glucosamine + NADPH + H(+). Its pathway is cell wall biogenesis; peptidoglycan biosynthesis. Functionally, cell wall formation. In Syntrophomonas wolfei subsp. wolfei (strain DSM 2245B / Goettingen), this protein is UDP-N-acetylenolpyruvoylglucosamine reductase.